The primary structure comprises 1088 residues: Tyrocidine synthase 1 (1088 aa).

Positions 528-602 (PPRTETESIL…QVALFVKSTT (75 aa)) constitute a Carrier domain. O-(pantetheine 4'-phosphoryl)serine is present on Ser563.

The protein belongs to the ATP-dependent AMP-binding enzyme family. In terms of assembly, large multienzyme complex of TycA, TycB and TycC. The cofactor is pantetheine 4'-phosphate.

The catalysed reaction is L-phenylalanine + ATP + H2O = D-phenylalanine + AMP + diphosphate + H(+). Its pathway is antibiotic biosynthesis; tyrocidine biosynthesis. In terms of biological role, in the first step of peptide synthesis this enzyme activates phenylalanine and racemizes it to the D-isomer. This Brevibacillus parabrevis protein is Tyrocidine synthase 1 (tycA).